We begin with the raw amino-acid sequence, 388 residues long: Dauer abnormal formation protein 25 (388 aa).

ANK repeat units follow at residues 40 to 69, 74 to 103, and 107 to 137; these read SGMSVLAAAAYRGNLTLVEKAIELKCDVND, TLYTPLMFAALSGKQDVCRLLMDSGARMYL, and IGKTASELAAFVGHHECVAIINNHITIDVIE. Zn(2+) contacts are provided by cysteine 321, cysteine 324, cysteine 333, cysteine 336, cysteine 341, cysteine 345, histidine 353, and cysteine 357. An MYND-type zinc finger spans residues 321 to 357; it reads CSVCGHPGAKKRCTQCKLAYCSQECQKFDWPIHKKVC.

Expressed in many ciliated sensory neurons.

The protein resides in the cell projection. Its subcellular location is the cilium. Functionally, may be involved in the trafficking and dendritic transport of signaling proteins, such as the receptor-type guanylate cyclases gcy-12 and daf-11, to the cilia. In ciliated sensory neurons, required for the calcium flux to the cytoplasm in response to onset and removal of a nitric oxide (NO) stimulus and is thereby required for the behavioral avoidance response to NO-producing organisms like P.aeruginosa. The chain is Dauer abnormal formation protein 25 (daf-25) from Caenorhabditis elegans.